A 565-amino-acid polypeptide reads, in one-letter code: UvrABC system protein C (565 aa).

The 78-residue stretch at 12–89 folds into the GIY-YIG domain; it reads EEPGVYIFKN…IRTHKPKYNV (78 aa). Residues 195–230 form the UVR domain; sequence KDVLPTLYEKIEQYASNLAFEKAAFLRDQVLVLQNI.

Belongs to the UvrC family. In terms of assembly, interacts with UvrB in an incision complex.

It is found in the cytoplasm. The UvrABC repair system catalyzes the recognition and processing of DNA lesions. UvrC both incises the 5' and 3' sides of the lesion. The N-terminal half is responsible for the 3' incision and the C-terminal half is responsible for the 5' incision. The sequence is that of UvrABC system protein C from Hydrogenobaculum sp. (strain Y04AAS1).